The sequence spans 153 residues: UPF0260 protein YcgN (153 aa).

This sequence belongs to the UPF0260 family.

In Salmonella agona (strain SL483), this protein is UPF0260 protein YcgN.